A 448-amino-acid polypeptide reads, in one-letter code: MAVEQNIAPAKLIDRFSHDGPGKCRTSEWRFEVPLNHSKPDEGTVRLFARSIHCVLGVDDPELPWMLYLQGGPGLGCKTPLEYAWLPSILEKGYRVLFLDERGTGQSSPITAKTLAQQGDHKKQADLLKRFRADNIVRDCEAVRKHLYQDAPADQSKWSVMAASFGGFCAISYVSMFPNSLVEVFIGGGPCPMVNEPGQVIPRLFAVAARRNEVYYKKYPEDVGRVKRIIKYLKENKVALSKGTLTPERFQQLGVMLGLHGGIDYIHGVVQRTDNDLDMFKFLTAPTLDLIENSGMAHNVIYSLLQEPMYCQGKAGGWCADKCRKADPRFSLNERNAQIWFTGEAIFSDMFESYDELKDLKPVAELLARSSDWGQLYNEAQLARNEVPVYVATAVEDMYVSYDLGCHTASKVKNLQQVVNNTWYHDAVETKASEVMPALFALKEDRID.

Residues 64 to 191 enclose the AB hydrolase-1 domain; it reads PWMLYLQGGP…VEVFIGGGPC (128 aa). The Nucleophile role is filled by S164. D397 is a catalytic residue. Residue H425 is the Proton donor of the active site.

Belongs to the peptidase S33 family. Homooligomer.

It localises to the cytoplasm. The catalysed reaction is Release of N-terminal proline from a peptide.. Its pathway is secondary metabolite biosynthesis. Its function is as follows. Proline iminopeptidase; part of the gene cluster that mediates the biosynthesis of aculenes, a unique type of norsesquiterpenes that contain a nordaucane skeleton linked to an L-proline moiety and are of mixed biosynthetic origin. The pathway begins with the synthesis of dauca-4,7-diene by the terpene cyclase aneC using farnesyl pyrophosphate (FPP) as substrate. The cytochrome P450 monooxygenase aneF then performs the initial oxidation at C-12 of dauca-4,7-diene to yield asperaculane D. Asperaculane D is substrate of the cytochrome P450 monooxygenase aneD for C-10 hydroxylation to yield asperaculane E. The cytochrome P450 monooxygenase aneG then converts asperaculane E into aculene D via C-2 oxidation. The monomodular nonribosomal peptide synthtase aneB adenylates L-proline and the thiohydrolase aneE transfers this activated L-proline derivative to aculenes D and C to produce respectively aculenes B and A. The dioxygenase aneA converts aculene D into aculene C, and aculene B into aculene A by introducing the 5,6-alkene moiety. Asperculanes A, B, C and F, as well as 14-prolyl asperculane C, might be shunt products of the pathway. This is Proline iminopeptidase aneH from Aspergillus aculeatus (strain ATCC 16872 / CBS 172.66 / WB 5094).